Here is a 363-residue protein sequence, read N- to C-terminus: UDP-N-acetylglucosamine--N-acetylmuramyl-(pentapeptide) pyrophosphoryl-undecaprenol N-acetylglucosamine transferase (363 aa).

Residues 13 to 15, Asn125, Arg166, Ser195, Ile249, 268 to 273, and Gln294 each bind UDP-N-acetyl-alpha-D-glucosamine; these read TGG and ALTVSE.

This sequence belongs to the glycosyltransferase 28 family. MurG subfamily.

It is found in the cell inner membrane. The enzyme catalyses di-trans,octa-cis-undecaprenyl diphospho-N-acetyl-alpha-D-muramoyl-L-alanyl-D-glutamyl-meso-2,6-diaminopimeloyl-D-alanyl-D-alanine + UDP-N-acetyl-alpha-D-glucosamine = di-trans,octa-cis-undecaprenyl diphospho-[N-acetyl-alpha-D-glucosaminyl-(1-&gt;4)]-N-acetyl-alpha-D-muramoyl-L-alanyl-D-glutamyl-meso-2,6-diaminopimeloyl-D-alanyl-D-alanine + UDP + H(+). It functions in the pathway cell wall biogenesis; peptidoglycan biosynthesis. In terms of biological role, cell wall formation. Catalyzes the transfer of a GlcNAc subunit on undecaprenyl-pyrophosphoryl-MurNAc-pentapeptide (lipid intermediate I) to form undecaprenyl-pyrophosphoryl-MurNAc-(pentapeptide)GlcNAc (lipid intermediate II). This Cellvibrio japonicus (strain Ueda107) (Pseudomonas fluorescens subsp. cellulosa) protein is UDP-N-acetylglucosamine--N-acetylmuramyl-(pentapeptide) pyrophosphoryl-undecaprenol N-acetylglucosamine transferase.